The sequence spans 127 residues: V-type proton ATPase subunit F (127 aa).

It belongs to the V-ATPase F subunit family. As to quaternary structure, V-ATPase is a heteromultimeric enzyme made up of two complexes: the ATP-hydrolytic V1 complex and the proton translocation V0 complex. The V1 complex consists of three catalytic AB heterodimers that form a heterohexamer, three peripheral stalks each consisting of EG heterodimers, one central rotor including subunits D and F, and the regulatory subunits C and H. The proton translocation complex V0 consists of the proton transport subunit a, a ring of proteolipid subunits c9c'', rotary subunit d, subunits e and f, and the accessory subunits VhaAC45 and ATP6AP2.

Subunit of the V1 complex of vacuolar(H+)-ATPase (V-ATPase), a multisubunit enzyme composed of a peripheral complex (V1) that hydrolyzes ATP and a membrane integral complex (V0) that translocates protons. V-ATPase is responsible for acidifying and maintaining the pH of intracellular compartments and in some cell types, is targeted to the plasma membrane, where it is responsible for acidifying the extracellular environment. This Anopheles gambiae (African malaria mosquito) protein is V-type proton ATPase subunit F (Vha14).